Consider the following 880-residue polypeptide: Probable LRR receptor-like serine/threonine-protein kinase At2g28960 (880 aa).

Positions 1 to 24 are cleaved as a signal peptide; it reads MEGRRQRLLVFIFGALAITHLVQA. Topologically, residues 25-511 are extracellular; that stretch reads QPPDQRGFIS…NNNNQTYIVP (487 aa). N180, N201, N228, N254, N287, N403, N430, and N441 each carry an N-linked (GlcNAc...) asparagine glycan. 3 LRR repeats span residues 409-430, 433-455, and 457-476; these read RIISLDLSSRGLKGVIAPAFQN, ELRKLDLSNNSFTGGVPEFLASM, and SLSIINLNWNDLTGPLPKLL. A glycan (N-linked (GlcNAc...) asparagine) is linked at N505. A helical membrane pass occupies residues 512-532; the sequence is VVASVASVLIIIAVLILILVF. At 533 to 880 the chain is on the cytoplasmic side; it reads KKRRPTQVDS…FTTEINPKAR (348 aa). T564 bears the Phosphothreonine mark. A Protein kinase domain is found at 573–846; it reads DNFERVLGEG…QVTNELKQCL (274 aa). ATP-binding positions include 579 to 587 and K601; that span reads LGEGGFGVV. Residue Y646 is modified to Phosphotyrosine. The Proton acceptor role is filled by D698. S732 carries the phosphoserine modification. T733 and T738 each carry phosphothreonine. Y746 carries the phosphotyrosine modification. Residues 854–880 are disordered; it reads GVREDMGSRSSVEMSTSFTTEINPKAR. Residues 861–880 are compositionally biased toward polar residues; the sequence is SRSSVEMSTSFTTEINPKAR.

The protein belongs to the protein kinase superfamily. Ser/Thr protein kinase family.

It localises to the membrane. It catalyses the reaction L-seryl-[protein] + ATP = O-phospho-L-seryl-[protein] + ADP + H(+). The enzyme catalyses L-threonyl-[protein] + ATP = O-phospho-L-threonyl-[protein] + ADP + H(+). In Arabidopsis thaliana (Mouse-ear cress), this protein is Probable LRR receptor-like serine/threonine-protein kinase At2g28960.